Here is a 966-residue protein sequence, read N- to C-terminus: MKLLTAKEVRNAYLDFFKEQKHIYVHSSSTIPLDDPTLLFANAGMNQFKPIFLGTADPNSEMSKWVRVANTQKCIRAGGKHNDLDDVGKDVYHHTFFEMLGNWSFGDYFKKEICSWAWEFLTQRLALPKDRLYVTYFGGDAASGLEPDLECKQMWLDLGLKPEHILPGSMKDNFWEMGETGPCGPCSELHFDRIGGRSVPELVNMDDPDVLEIWNLVFIQYNRESDGSLKQLPKKHIDCGMGFERLVSVIQNKRSNYDTDLFVPLFDAIQAGTGAPPYQGRVGADDVDGIDMAYRVLADHARTITIALADGGTPDNTGRGYVLRRILRRAVRYATEKLNAKPGFFATLVNTVVDLLGDAFPEVKKDPQHIIDIINEEELQFLKTLTRGRNLLNRTIEKLGNQTTIPGDVAWRLYDTYGFPVDLTQLMAEEKSLKIDMDGYEAAKHNSYVLSQGKGASKIEEINLDVHAISQLQEQGVPPTNDTFKYKYEAVSDERDSAYNYGVCNSKIVALRFENQFVNEITSGQKAGIVLDKTNFYAESGGQIYDQGALVKVNDEANEFLVDRVYNRGGYILHIGVVEGTLKVGDELELHIDVERRWLTMKNHSATHALNHCLLQVLGKDTEQKGSLVVPEKLRFDFNSKAAMTIEQVSKTEQLTKEMVYKNVPIYAKESKLALAKKIRGLRSVFDEVYPDPVRVISFGVPVDELEQNPDSEAGEQTSVEFCGGTHLRRSGHIMDFVISSEEAIAKGIRRIVALTGPEALKALKKSEAFEQEIVRLKATIDNDKSGKDSKSHVKEIVELTEQISHATIPYVKKDEMRNLLKGLKKTLDDKERALRAAVSVTVVERAKTLCEANPNATVLVEQLEAFNNTKALDAALKQVRSQLPDAAAMFLSVDADSKKIFCLSSVPKSAVEKGLKANEWVQHVSATLGGKGGGKPESAQASGTNYEKVDEIVQLASKFAQSKLS.

The Zn(2+) site is built by H604, H608, C723, and H727.

It belongs to the class-II aminoacyl-tRNA synthetase family. As to quaternary structure, monomer. Requires Zn(2+) as cofactor.

Its subcellular location is the cytoplasm. The catalysed reaction is tRNA(Ala) + L-alanine + ATP = L-alanyl-tRNA(Ala) + AMP + diphosphate. Its function is as follows. Catalyzes the attachment of alanine to tRNA(Ala) in a two-step reaction: alanine is first activated by ATP to form Ala-AMP and then transferred to the acceptor end of tRNA(Ala). Also edits incorrectly charged tRNA(Ala) via its editing domain. This chain is Alanine--tRNA ligase, cytoplasmic, found in Drosophila melanogaster (Fruit fly).